The chain runs to 222 residues: Small ribosomal subunit protein uS2 (222 aa).

The protein belongs to the universal ribosomal protein uS2 family.

This is Small ribosomal subunit protein uS2 from Karelsulcia muelleri (strain GWSS) (Sulcia muelleri).